We begin with the raw amino-acid sequence, 249 residues long: ATP synthase subunit a, chloroplastic (249 aa).

The next 5 membrane-spanning stretches (helical) occupy residues 40 to 60 (QVLITSWVVIAILLGSAVLAV), 97 to 117 (VPFIGTLFLFIFVSNWSGALL), 136 to 156 (INTTVALALLTSVAYFYAGLS), 201 to 221 (LVVVVLVSLVPLVVPIPVMFL), and 222 to 242 (GLFTSGIQALIFATLAAAYIG).

The protein belongs to the ATPase A chain family. F-type ATPases have 2 components, CF(1) - the catalytic core - and CF(0) - the membrane proton channel. CF(1) has five subunits: alpha(3), beta(3), gamma(1), delta(1), epsilon(1). CF(0) has four main subunits: a, b, b' and c.

It localises to the plastid. It is found in the chloroplast thylakoid membrane. Key component of the proton channel; it plays a direct role in the translocation of protons across the membrane. This chain is ATP synthase subunit a, chloroplastic, found in Draba nemorosa (Woodland whitlowgrass).